The following is a 130-amino-acid chain: Small ribosomal subunit protein bS6 (130 aa).

The tract at residues 100–130 (SPMVKAKDERRERHDFASEANDDSEAGDSEE) is disordered. The span at 104–116 (KAKDERRERHDFA) shows a compositional bias: basic and acidic residues. Acidic residues predominate over residues 119–130 (ANDDSEAGDSEE).

Belongs to the bacterial ribosomal protein bS6 family.

Binds together with bS18 to 16S ribosomal RNA. The sequence is that of Small ribosomal subunit protein bS6 from Yersinia pestis (strain Pestoides F).